A 388-amino-acid polypeptide reads, in one-letter code: Probable proton-coupled zinc antiporter SLC30A3 (388 aa).

Residues 1-13 (MEPSPTTGGSETT) are compositionally biased toward polar residues. 2 disordered regions span residues 1-30 (MEPS…GLRL) and 35-54 (TEAP…SFHH). The Cytoplasmic portion of the chain corresponds to 1–75 (MEPSPTTGGS…TPERMQAQRQ (75 aa)). Residues 76–96 (LCTACAVCCVFMAGEVVGGYL) form a helical membrane-spanning segment. Topologically, residues 97–105 (AHSLAIMTD) are lumenal. A helical transmembrane segment spans residues 106-126 (AAHLLADVGSMMGSLFSLWLS). Zn(2+)-binding residues include His108 and Asp112. The Cytoplasmic segment spans residues 127 to 145 (TRPATRTMTFGWHRSETLG). A helical membrane pass occupies residues 146 to 166 (ALASVVSLWMVTGILLYLAFI). The Lumenal segment spans residues 167–177 (RLLHSDYHIEG). Residues 178-198 (GAMLLTASIAVCANLLMAFVL) form a helical membrane-spanning segment. Over 199-235 (HQAGPPHSHGSRGAEYAPLEEGSGEPLPLGNTSVRAA) the chain is Cytoplasmic. The chain crosses the membrane as a helical span at residues 236–256 (FVHVLGDLLQSLGVLIASILI). Zn(2+) contacts are provided by His238 and Asp242. Topologically, residues 257–264 (YFKPQYKA) are lumenal. Residues 265–285 (ADPISTFLFSICALGSTAPTL) traverse the membrane as a helical segment. Over 286 to 388 (RDVLRVLMEG…CLRCQEPPQA (103 aa)) the chain is Cytoplasmic.

Belongs to the cation diffusion facilitator (CDF) transporter (TC 2.A.4) family. SLC30A subfamily. In terms of assembly, homodimer. Homodimerization could regulate efficiency of zinc transport. Interacts with TMEM163.

Its subcellular location is the cytoplasmic vesicle. The protein resides in the secretory vesicle. The protein localises to the synaptic vesicle membrane. It is found in the synapse. It localises to the synaptosome. Its subcellular location is the late endosome membrane. The protein resides in the lysosome membrane. It carries out the reaction Zn(2+)(in) + 2 H(+)(out) = Zn(2+)(out) + 2 H(+)(in). In terms of biological role, probable proton-coupled zinc ion antiporter mediating the import of zinc from cytoplasm into synaptic vesicles and participating to cellular zinc ion homeostasis in the brain. The sequence is that of Probable proton-coupled zinc antiporter SLC30A3 from Bos taurus (Bovine).